A 260-amino-acid chain; its full sequence is Small ribosomal subunit protein uS2 (260 aa).

A disordered region spans residues 225-260 (KGQTQTEAAPNAQAAPEAAAPAEQPAEEAAAASSEG). Residues 231-260 (EAAPNAQAAPEAAAPAEQPAEEAAAASSEG) show a composition bias toward low complexity.

The protein belongs to the universal ribosomal protein uS2 family.

This Rhodopirellula baltica (strain DSM 10527 / NCIMB 13988 / SH1) protein is Small ribosomal subunit protein uS2.